We begin with the raw amino-acid sequence, 427 residues long: Adenylosuccinate synthetase (427 aa).

Residues 12-18 (GDEGKGK) and 40-42 (GHT) each bind GTP. Asp13 serves as the catalytic Proton acceptor. Mg(2+) contacts are provided by Asp13 and Gly40. IMP is bound by residues 13–16 (DEGK), 38–41 (NAGH), Thr128, Arg142, Gln223, Thr238, and Arg302. His41 (proton donor) is an active-site residue. 298-304 (VTTGRDR) contributes to the substrate binding site. GTP contacts are provided by residues Arg304, 330-332 (KLD), and 412-414 (GVG).

Belongs to the adenylosuccinate synthetase family. In terms of assembly, homodimer. Requires Mg(2+) as cofactor.

Its subcellular location is the cytoplasm. The enzyme catalyses IMP + L-aspartate + GTP = N(6)-(1,2-dicarboxyethyl)-AMP + GDP + phosphate + 2 H(+). Its pathway is purine metabolism; AMP biosynthesis via de novo pathway; AMP from IMP: step 1/2. Functionally, plays an important role in the de novo pathway of purine nucleotide biosynthesis. Catalyzes the first committed step in the biosynthesis of AMP from IMP. This Streptomyces coelicolor (strain ATCC BAA-471 / A3(2) / M145) protein is Adenylosuccinate synthetase.